Consider the following 429-residue polypeptide: Glutamate-1-semialdehyde 2,1-aminomutase (429 aa).

Residue lysine 265 is modified to N6-(pyridoxal phosphate)lysine.

It belongs to the class-III pyridoxal-phosphate-dependent aminotransferase family. HemL subfamily. Homodimer. Requires pyridoxal 5'-phosphate as cofactor.

It localises to the cytoplasm. The catalysed reaction is (S)-4-amino-5-oxopentanoate = 5-aminolevulinate. The protein operates within porphyrin-containing compound metabolism; protoporphyrin-IX biosynthesis; 5-aminolevulinate from L-glutamyl-tRNA(Glu): step 2/2. The sequence is that of Glutamate-1-semialdehyde 2,1-aminomutase from Acidobacterium capsulatum (strain ATCC 51196 / DSM 11244 / BCRC 80197 / JCM 7670 / NBRC 15755 / NCIMB 13165 / 161).